Consider the following 397-residue polypeptide: Flavohemoprotein (397 aa).

Residues 4-140 form the Globin domain; sequence SFSPHTITLI…IANLLKDREA (137 aa). H87 serves as a coordination point for heme b. Active-site charge relay system residues include Y97 and E139. Residues 151 to 397 form a reductase region; sequence GGWIHWRRFV…FGPMDEEMAA (247 aa). The FAD-binding FR-type domain occupies 154-258; that stretch reads IHWRRFVISK…TPPVGDFFLP (105 aa). FAD is bound by residues Y192 and 207 to 210; that span reads RNYS. 271-276 contributes to the NADP(+) binding site; the sequence is GVGLTP. 387–390 contacts FAD; sequence FFGP.

It belongs to the globin family. Two-domain flavohemoproteins subfamily. The protein in the C-terminal section; belongs to the flavoprotein pyridine nucleotide cytochrome reductase family. It depends on heme b as a cofactor. The cofactor is FAD.

It carries out the reaction 2 nitric oxide + NADPH + 2 O2 = 2 nitrate + NADP(+) + H(+). It catalyses the reaction 2 nitric oxide + NADH + 2 O2 = 2 nitrate + NAD(+) + H(+). Is involved in NO detoxification in an aerobic process, termed nitric oxide dioxygenase (NOD) reaction that utilizes O(2) and NAD(P)H to convert NO to nitrate, which protects the bacterium from various noxious nitrogen compounds. Therefore, plays a central role in the inducible response to nitrosative stress. The polypeptide is Flavohemoprotein (Xylella fastidiosa (strain 9a5c)).